The chain runs to 30 residues: Chassatide C3 (30 aa).

The cyclopeptide (Gly-Asn) cross-link spans 1-30; sequence GIPCGESCVWIPCISSALGCSCKNKVCYRN. Intrachain disulfides connect Cys-4/Cys-20, Cys-8/Cys-22, and Cys-13/Cys-27.

In terms of processing, this is a cyclic peptide. As to expression, expressed in fruit, pedicel, stem and root but not in leaf (at protein level).

In terms of biological role, probably participates in a plant defense mechanism. This chain is Chassatide C3, found in Chassalia chartacea (Chassalia curviflora).